The following is a 179-amino-acid chain: Large ribosomal subunit protein uL5 (179 aa).

It belongs to the universal ribosomal protein uL5 family. In terms of assembly, part of the 50S ribosomal subunit; part of the 5S rRNA/L5/L18/L25 subcomplex. Contacts the 5S rRNA and the P site tRNA. Forms a bridge to the 30S subunit in the 70S ribosome.

Functionally, this is one of the proteins that bind and probably mediate the attachment of the 5S RNA into the large ribosomal subunit, where it forms part of the central protuberance. In the 70S ribosome it contacts protein S13 of the 30S subunit (bridge B1b), connecting the 2 subunits; this bridge is implicated in subunit movement. Contacts the P site tRNA; the 5S rRNA and some of its associated proteins might help stabilize positioning of ribosome-bound tRNAs. The chain is Large ribosomal subunit protein uL5 from Pseudomonas putida (strain W619).